Reading from the N-terminus, the 185-residue chain is Probable host range protein 2 (185 aa).

It belongs to the poxviridae C7 protein family.

In terms of biological role, plays a role for multiplication of the virus in different cell types. This Swinepox virus (strain Kasza) (SWPV) protein is Probable host range protein 2.